Here is a 275-residue protein sequence, read N- to C-terminus: Formamidopyrimidine-DNA glycosylase (275 aa).

The active-site Schiff-base intermediate with DNA is P2. The active-site Proton donor is the E3. Residue K58 is the Proton donor; for beta-elimination activity of the active site. DNA-binding residues include H91, R109, and R154. Residues 240–274 form an FPG-type zinc finger; it reads AVYERAGLPCRVCGTPIRRLVQGQRATYYCPSCQK. R264 (proton donor; for delta-elimination activity) is an active-site residue.

Belongs to the FPG family. Monomer. Zn(2+) is required as a cofactor.

It carries out the reaction Hydrolysis of DNA containing ring-opened 7-methylguanine residues, releasing 2,6-diamino-4-hydroxy-5-(N-methyl)formamidopyrimidine.. The enzyme catalyses 2'-deoxyribonucleotide-(2'-deoxyribose 5'-phosphate)-2'-deoxyribonucleotide-DNA = a 3'-end 2'-deoxyribonucleotide-(2,3-dehydro-2,3-deoxyribose 5'-phosphate)-DNA + a 5'-end 5'-phospho-2'-deoxyribonucleoside-DNA + H(+). Its function is as follows. Involved in base excision repair of DNA damaged by oxidation or by mutagenic agents. Acts as a DNA glycosylase that recognizes and removes damaged bases. Has a preference for oxidized purines, such as 7,8-dihydro-8-oxoguanine (8-oxoG). Has AP (apurinic/apyrimidinic) lyase activity and introduces nicks in the DNA strand. Cleaves the DNA backbone by beta-delta elimination to generate a single-strand break at the site of the removed base with both 3'- and 5'-phosphates. The protein is Formamidopyrimidine-DNA glycosylase of Bordetella petrii (strain ATCC BAA-461 / DSM 12804 / CCUG 43448).